Here is a 358-residue protein sequence, read N- to C-terminus: Trace amine-associated receptor 7a (358 aa).

At 1–47 (MDKLVDNFLSGQSRTMSEDLLSASSPQLCYENLNGSCIRSPYSPGPR) the chain is on the extracellular side. Residue N34 is glycosylated (N-linked (GlcNAc...) asparagine). Intrachain disulfides connect C37–C201 and C120–C205. A helical transmembrane segment spans residues 48–68 (LILYAVFGFGAVLAVCGNLLV). Over 69 to 83 (MTSILHFRQLHSPAN) the chain is Cytoplasmic. The helical transmembrane segment at 84–104 (FLVASLACADFLVGLTVMPFS) threads the bilayer. Residues 105–121 (TVRSVEGCWYFGDTYCK) are Extracellular-facing. The helical transmembrane segment at 122–143 (FHSCFEGSFCYSSIFHLCFISV) threads the bilayer. Over 144 to 166 (DRYIAVSDPLIYPTRFTASVSGK) the chain is Cytoplasmic. The helical transmembrane segment at 167–187 (CITFSWLLSIIYSFSLLYTGA) threads the bilayer. The Extracellular portion of the chain corresponds to 188–212 (NEAGLEDLVSALTCVGGCQIAVNQS). N-linked (GlcNAc...) asparagine glycosylation occurs at N210. A helical transmembrane segment spans residues 213–233 (WVFINFLLFLVPTLVMMTVYS). The Cytoplasmic portion of the chain corresponds to 234–274 (KIFLIAKQQAQNIEKMSKQTTRASESYKDRVAKRERKAAKT). The chain crosses the membrane as a helical span at residues 275–295 (LGIAVAAFLLSWLPYFIDSII). Topologically, residues 296–309 (DAFLGFITPTYVYE) are extracellular. Residues 310–333 (ILVWIAYYNSAMNPLIYAFFYPWF) traverse the membrane as a helical segment. Over 334 to 358 (RKAIKLIVTGKILRQNSSVTNLFPE) the chain is Cytoplasmic.

Belongs to the G-protein coupled receptor 1 family.

The protein localises to the cell membrane. Its function is as follows. Olfactory receptor specific for N,N-dimethylalkylamines trace amines. Trace amine compounds are enriched in animal body fluids and act on trace amine-associated receptors (TAARs) to elicit both intraspecific and interspecific innate behaviors. Ligand-binding causes a conformation change that triggers signaling via G(s)-class of G alpha proteins (GNAL or GNAS). This Rattus norvegicus (Rat) protein is Trace amine-associated receptor 7a.